Consider the following 192-residue polypeptide: 7-methyl-GTP pyrophosphatase (192 aa).

The active-site Proton acceptor is aspartate 69.

The protein belongs to the Maf family. YceF subfamily. A divalent metal cation is required as a cofactor.

The protein localises to the cytoplasm. The catalysed reaction is N(7)-methyl-GTP + H2O = N(7)-methyl-GMP + diphosphate + H(+). Functionally, nucleoside triphosphate pyrophosphatase that hydrolyzes 7-methyl-GTP (m(7)GTP). May have a dual role in cell division arrest and in preventing the incorporation of modified nucleotides into cellular nucleic acids. The polypeptide is 7-methyl-GTP pyrophosphatase (Pseudomonas savastanoi pv. phaseolicola (strain 1448A / Race 6) (Pseudomonas syringae pv. phaseolicola (strain 1448A / Race 6))).